Consider the following 311-residue polypeptide: Formimidoylglutamase (311 aa).

Mn(2+)-binding residues include H130, D155, H157, D159, C242, and D244.

The protein belongs to the arginase family. Requires Mn(2+) as cofactor.

It catalyses the reaction N-formimidoyl-L-glutamate + H2O = formamide + L-glutamate. It functions in the pathway amino-acid degradation; L-histidine degradation into L-glutamate; L-glutamate from N-formimidoyl-L-glutamate (hydrolase route): step 1/1. Its function is as follows. Catalyzes the conversion of N-formimidoyl-L-glutamate to L-glutamate and formamide. The chain is Formimidoylglutamase from Staphylococcus aureus (strain bovine RF122 / ET3-1).